A 571-amino-acid polypeptide reads, in one-letter code: Quinone-dependent D-lactate dehydrogenase (571 aa).

Residues 44 to 273 enclose the FAD-binding PCMH-type domain; that stretch reads GGGPVFAVVR…FAVRTRTFPR (230 aa). FAD-binding positions include 78–82, 86–87, G145, S152, G162, and V263; these read ASNTG and GS.

Belongs to the quinone-dependent D-lactate dehydrogenase family. Requires FAD as cofactor.

It is found in the cell membrane. The catalysed reaction is (R)-lactate + a quinone = a quinol + pyruvate. Functionally, catalyzes the oxidation of D-lactate to pyruvate. Also has weak activity with L-lactate and DL-2-hydroxybutyrate. Electrons derived from D-lactate oxidation enter the electron transport chain. Essential for growth with D-lactate as sole carbon and energy source. This Corynebacterium glutamicum (strain ATCC 13032 / DSM 20300 / JCM 1318 / BCRC 11384 / CCUG 27702 / LMG 3730 / NBRC 12168 / NCIMB 10025 / NRRL B-2784 / 534) protein is Quinone-dependent D-lactate dehydrogenase.